A 78-amino-acid chain; its full sequence is Putative gastrointestinal growth factor xP1 (78 aa).

An N-terminal signal peptide occupies residues 1 to 23; sequence MNYKVFCLVAIALIVGSIGSANG. One can recognise a P-type domain in the interval 30–73; that stretch reads EQCSVERLARVNCGYSGITPQECTKQGCCFDSTIQDAPWCFYPR. Cystine bridges form between cysteine 32–cysteine 58, cysteine 42–cysteine 57, and cysteine 52–cysteine 69.

Stomach mucosa.

It localises to the secreted. In terms of biological role, may act as a growth factor. The sequence is that of Putative gastrointestinal growth factor xP1 (p1) from Xenopus laevis (African clawed frog).